We begin with the raw amino-acid sequence, 263 residues long: Protein IQ-DOMAIN 9 (263 aa).

Positions 16 to 41 are disordered; that stretch reads SKQGTEKKKTSAVKPKKGSKKKGTSL. The Nuclear localization signal 1 motif lies at 21–28; sequence EKKKTSAV. The span at 25–38 shows a compositional bias: basic residues; that stretch reads TSAVKPKKGSKKKG. The 30-residue stretch at 46 to 75 folds into the IQ domain; the sequence is EDWAATRIQTAFKAYKARKSLRRLKGIARA. The segment at 59–78 is calmodulin-binding; the sequence is AYKARKSLRRLKGIARAKLS. Positions 107-114 match the Nuclear localization signal 2 motif; the sequence is ARRVCMVT. The segment at 216-263 is disordered; sequence TPKKPKSSKTDSNSPAKRTVSLSSVPAKTPFPGARNTVKPRRLSFPGA. The span at 226-241 shows a compositional bias: polar residues; that stretch reads DSNSPAKRTVSLSSVP.

The protein belongs to the IQD family. Binds to multiple calmodulin (CaM) in the presence of Ca(2+) and CaM-like proteins.

Its subcellular location is the nucleus. It localises to the nuclear body. May be involved in cooperative interactions with calmodulins or calmodulin-like proteins. Recruits calmodulin proteins to microtubules, thus being a potential scaffold in cellular signaling and trafficking. May associate with nucleic acids and regulate gene expression at the transcriptional or post-transcriptional level. The chain is Protein IQ-DOMAIN 9 from Arabidopsis thaliana (Mouse-ear cress).